The primary structure comprises 465 residues: GTPase Der (465 aa).

EngA-type G domains follow at residues 27–190 (PVLA…PEAP) and 202–375 (RRIA…AGWE). GTP is bound by residues 33 to 40 (GRPNVGKS), 80 to 84 (DTGGW), 142 to 145 (NKVD), 208 to 215 (GRPNVGKS), 255 to 259 (DTAGI), and 320 to 323 (NKWD). Positions 376 to 458 (TRVPTGRLNA…PIHISVRVRE (83 aa)) constitute a KH-like domain.

It belongs to the TRAFAC class TrmE-Era-EngA-EngB-Septin-like GTPase superfamily. EngA (Der) GTPase family. As to quaternary structure, associates with the 50S ribosomal subunit.

GTPase that plays an essential role in the late steps of ribosome biogenesis. In Streptomyces coelicolor (strain ATCC BAA-471 / A3(2) / M145), this protein is GTPase Der.